The sequence spans 112 residues: Class I hydrophobin 7 (112 aa).

An N-terminal signal peptide occupies residues Met1–Ala23. 4 disulfide bridges follow: Cys36–Cys93, Cys43–Cys87, Cys44–Cys74, and Cys94–Cys107. N-linked (GlcNAc...) asparagine glycosylation is present at Asn96.

The protein belongs to the fungal hydrophobin family. In terms of assembly, self-assembles to form functional amyloid fibrils called rodlets. Self-assembly into fibrillar rodlets occurs spontaneously at hydrophobic:hydrophilic interfaces and the rodlets further associate laterally to form amphipathic monolayers.

Its subcellular location is the secreted. It localises to the cell wall. Functionally, aerial growth, conidiation, and dispersal of filamentous fungi in the environment rely upon a capability of their secreting small amphipathic proteins called hydrophobins (HPBs) with low sequence identity. Class I can self-assemble into an outermost layer of rodlet bundles on aerial cell surfaces, conferring cellular hydrophobicity that supports fungal growth, development and dispersal; whereas Class II form highly ordered films at water-air interfaces through intermolecular interactions but contribute nothing to the rodlet structure. In Flammulina velutipes (Agaricus velutipes), this protein is Class I hydrophobin 7.